Here is a 251-residue protein sequence, read N- to C-terminus: Aspartate/glutamate leucyltransferase (251 aa).

The protein belongs to the R-transferase family. Bpt subfamily.

It is found in the cytoplasm. The catalysed reaction is N-terminal L-glutamyl-[protein] + L-leucyl-tRNA(Leu) = N-terminal L-leucyl-L-glutamyl-[protein] + tRNA(Leu) + H(+). The enzyme catalyses N-terminal L-aspartyl-[protein] + L-leucyl-tRNA(Leu) = N-terminal L-leucyl-L-aspartyl-[protein] + tRNA(Leu) + H(+). In terms of biological role, functions in the N-end rule pathway of protein degradation where it conjugates Leu from its aminoacyl-tRNA to the N-termini of proteins containing an N-terminal aspartate or glutamate. This Xanthomonas oryzae pv. oryzae (strain MAFF 311018) protein is Aspartate/glutamate leucyltransferase.